A 998-amino-acid polypeptide reads, in one-letter code: MVLISDAFGLEISPNGILVGHGDQAVLYSSEPKVELPVQLREGKVRGFAWSSLRKSQRLLLLYSENEYSLIRCTTSSENDLFQLVYEGETRDWINAALFLEDENESEDRKRFVLHTSHSALLYMEYDLTSNADCTVLELARCTDSSILYYTKLHGSSFNKLAIISGNAFGELLVWQTQFPTESDPKSVMKTYPLLLRIEAHNGVIHSIEFDLQSQLLVTTSDDRSVKFWNIQKSGDWTTAEIKPMFSCYGHSSRVMCVVILKIDDRTFVASGGEDSYVCIWSSSGELILKRRQQFGAPIWRLGFSQDAEILYSTSSTGNLVGQNLKEVLNRPKIESTILSSLGDANEFVRNLKFVNNEIIVGLSSLNRLYYTRISPDSSHENKWLMVNDFPSYKRTVLEVFDDIIATCGHRRITLHRYNTNTNDFEQLFDGIRMKGTIRSFQFLSRDRYLVSDNLGYCLLLQTHQLHIESHIALFNNREPWITAALLISEQYLLLGNREGHVMLYCRSSASDDFQLKDSIRYLHGKMGSNFFKLLSLNADNAHVMSGGHEAFLKYLSVRFSDSTLRVSQREGIPLAWVEASPSDDLILGFNDNHIVAWSRRNDILLQLACGGGHRCWDFRLSDGDSQLSIAYVKQKRVYFYRNSLYNAVDNRLKDIEPNNWHVRNCNTLRLITPRNQSDPFILSAGDDNIIKVTQVTNDSLSQRAEMHSHISTVRSLQAIPYKSNGGDSSTWLVFSVGGRSQLCISQLSIDASNKCWISEISSHTLHNVAASKTSTIEARLMAIDVVQHSDGDLFSIYVAGGDGNISHYIWELETPNQLDLKHFVDIQRCPLGIQWIASKGMLLVSTTNGEVYGFDRTLETTYFQLQLHVTGINTIDIYVDRHLLHILSGGDDESIKYTVLNLNNNNVEQKIEYLGLHNAQVNALAIHCPTKSVAASELFAYTCSIDRQIYRIDLSTHKYKRVGYTCIADVKGMLLDEHQRMYFYGCGLQTMSISNIL.

WD repeat units lie at residues 148-185, 200-239, 250-291, 294-333, 476-515, 527-566, 567-608, 664-704, 779-821, 826-865, and 868-911; these read LYYTKLHGSSFNKLAIISGNAFGELLVWQTQFPTESDP, AHNGVIHSIEFDLQSQLLVTTSDDRSVKFWNIQKSGDWTT, GHSS…ILKR, QFGAPIWRLGFSQDAEILYSTSSTGNLVGQNLKEVLNRPK, NNREPWITAALLISEQYLLLGNREGHVMLYCRSSASDDFQ, MGSNFFKLLSLNADNAHVMSGGHEAFLKYLSVRFSDSTLR, VSQR…LLQL, RNCN…LSQR, ARLM…QLDL, DIQRCPLGIQWIASKGMLLVSTTNGEVYGFDRTLETTYFQ, and LHVT…VEQK.

The protein belongs to the WD repeat WDR6 family. As to quaternary structure, interacts with Trm7-34.

The protein resides in the cytoplasm. In terms of biological role, together with methyltransferase Trm7-34, methylates the 2'-O-ribose of nucleotides at position 34 of the anticodon loop of substrate tRNAs. This chain is tRNA (34-2'-O)-methyltransferase regulator WDR6, found in Drosophila melanogaster (Fruit fly).